The following is a 26-amino-acid chain: FKAVRGERLVYSVKWEGGGKITTRIL.

The polypeptide is Probable early E4 17 kDa protein (Homo sapiens (Human)).